We begin with the raw amino-acid sequence, 300 residues long: MINSIRIGTRKSKLALTQTNLVIEQIKQHFPNINCEIVEITTSGDLIQNKPLYDIGGKALFLKEIEQALLNKKVDLAVHSLKDVPGIIPKDLSIEAVLEREDSRDVFVCLTHKSIEELPKNAVIGTSSVRRKLCVQRMRPDLEIIVFRGNVDSRINKLINKEVDATILAYAGLKRLNAFNPEYCHLIEHSQMLPCIGQGVIAIEIRKDDHDMIEICKQINHLPTFELIKPERALLEYLDANCRTPIGAYSKYLDNGDIQTDFMLGNLDGSKIAFHTEISNPKTSKESGIKAAKVMLLSLS.

Residue Cys-242 is modified to S-(dipyrrolylmethanemethyl)cysteine.

It belongs to the HMBS family. In terms of assembly, monomer. The cofactor is dipyrromethane.

The enzyme catalyses 4 porphobilinogen + H2O = hydroxymethylbilane + 4 NH4(+). Its pathway is porphyrin-containing compound metabolism; protoporphyrin-IX biosynthesis; coproporphyrinogen-III from 5-aminolevulinate: step 2/4. Tetrapolymerization of the monopyrrole PBG into the hydroxymethylbilane pre-uroporphyrinogen in several discrete steps. The polypeptide is Porphobilinogen deaminase (Rickettsia bellii (strain OSU 85-389)).